The sequence spans 872 residues: Alanine--tRNA ligase (872 aa).

Residues His567, His571, Cys669, and His673 each contribute to the Zn(2+) site.

This sequence belongs to the class-II aminoacyl-tRNA synthetase family. It depends on Zn(2+) as a cofactor.

It is found in the cytoplasm. It catalyses the reaction tRNA(Ala) + L-alanine + ATP = L-alanyl-tRNA(Ala) + AMP + diphosphate. Catalyzes the attachment of alanine to tRNA(Ala) in a two-step reaction: alanine is first activated by ATP to form Ala-AMP and then transferred to the acceptor end of tRNA(Ala). Also edits incorrectly charged Ser-tRNA(Ala) and Gly-tRNA(Ala) via its editing domain. This chain is Alanine--tRNA ligase, found in Streptococcus sanguinis (strain SK36).